The sequence spans 137 residues: Small ribosomal subunit protein uS12 (137 aa).

Position 102 is a 3-methylthioaspartic acid (aspartate 102).

The protein belongs to the universal ribosomal protein uS12 family. As to quaternary structure, part of the 30S ribosomal subunit. Contacts proteins S8 and S17. May interact with IF1 in the 30S initiation complex.

In terms of biological role, with S4 and S5 plays an important role in translational accuracy. Its function is as follows. Interacts with and stabilizes bases of the 16S rRNA that are involved in tRNA selection in the A site and with the mRNA backbone. Located at the interface of the 30S and 50S subunits, it traverses the body of the 30S subunit contacting proteins on the other side and probably holding the rRNA structure together. The combined cluster of proteins S8, S12 and S17 appears to hold together the shoulder and platform of the 30S subunit. This is Small ribosomal subunit protein uS12 from Mycoplasmopsis agalactiae (strain NCTC 10123 / CIP 59.7 / PG2) (Mycoplasma agalactiae).